Here is a 149-residue protein sequence, read N- to C-terminus: Lymphocyte antigen 6 complex locus protein G5c (149 aa).

An N-terminal signal peptide occupies residues 1–41 (MLFMAGPAASWSLRPLGLHGVPQALCAVLLTVLVMKTLVLG). The UPAR/Ly6 domain maps to 59–149 (LNCYRCLLET…NPDNRKNSMH (91 aa)). Cystine bridges form between cysteine 61/cysteine 88, cysteine 64/cysteine 73, cysteine 80/cysteine 106, cysteine 115/cysteine 132, and cysteine 133/cysteine 138. The N-linked (GlcNAc...) asparagine glycan is linked to asparagine 95.

As to quaternary structure, forms oligomers. In terms of processing, N-glycosylated. As to expression, detected in adult brain.

It localises to the secreted. In terms of biological role, may have a role in hematopoietic cell differentiation. This chain is Lymphocyte antigen 6 complex locus protein G5c (Ly6g5c), found in Mus musculus (Mouse).